The chain runs to 730 residues: MQAKKRYLILFSAGVCLILLFYLQGPASRRTPKRGDDPHPHWPHFSDPLRAFIPWDQTETEDYNVRASPRHKRDDSTGADKCRMDSCFDFELCKRNGFKVYVYPQQKGEKISESYQNILSSIEGSRFYTSDPGQACLFVLNLDTLDRDQLSPQYVHNLKTKIQNLNLWNNGRNHLIFNLYSGTWPDYTEDLGFDIGQAMLAKASISTESFRPNFDISIPLFSKDHPRTGGERGFLKYNTIPPFRKYMLVFKGKRYLTGIGSDTRNALYHIHNAEDVVLLTTCKHGKDWQKHKDARCDKDNAEYDRYDYKEMLHNSTFCLVPRGRRLGSFRFLEALQAACVPVMLSNGWELPFSEIIDWRTAAVIGDERLLLQIPSTVRSIHQDRILSLRQQTQFLWEAYFSSVEKIVLTTLEIIQDRVLQHSAHSTLMWNRLPGGLFTLPQYSSYLGDFPFFYALLGIKPHQKFTAVIHAVTPLVSQSQPIFKLLVAVAKSQFCAQIMVLWNCDKPLPSKHRWPATSVPVIVIEGESKVMSSRFLPYENIITDAVLSLDEDTVLSTTEVDFAFTVWQSFPERIVGYPARSHFWDSNKERWGYTSKWTNDYSMVLTGAAFYHRYYNYLYTHYLPGSLKGLVDQLSNCEDILMNFLVSAVTKMPPIKVTQKKQYKETMMGQTSRASRWADPDHFAQRQTCMNKFASWFGTMPLVHSQMRLDPVLFRDQVSILRKKYRDIERL.

Over 1–6 (MQAKKR) the chain is Cytoplasmic. The chain crosses the membrane as a helical; Signal-anchor for type II membrane protein span at residues 7–27 (YLILFSAGVCLILLFYLQGPA). Topologically, residues 28–730 (SRRTPKRGDD…RKKYRDIERL (703 aa)) are lumenal. N-linked (GlcNAc...) asparagine glycosylation occurs at asparagine 314. The UDP-N-acetyl-alpha-D-glucosamine site is built by arginine 533, aspartate 549, glutamate 550, aspartate 551, glutamate 637, aspartate 638, and arginine 685. Aspartate 551 contributes to the Mn(2+) binding site. Residues cysteine 636 and cysteine 688 are joined by a disulfide bond. Residue aspartate 638 is part of the active site.

This sequence belongs to the glycosyltransferase 47 family. The cofactor is Mn(2+).

It localises to the endoplasmic reticulum membrane. It catalyses the reaction 3-O-{[(1-&gt;4)-beta-D-GlcA-(1-&gt;4)-alpha-D-GlcNAc](n)-(1-&gt;4)-beta-D-GlcA-(1-&gt;3)-beta-D-Gal-(1-&gt;3)-beta-D-Gal-(1-&gt;4)-beta-D-Xyl}-L-seryl-[protein] + UDP-N-acetyl-alpha-D-glucosamine = 3-O-{alpha-D-GlcNAc-[(1-&gt;4)-beta-D-GlcA-(1-&gt;4)-alpha-D-GlcNAc](n)-(1-&gt;4)-beta-D-GlcA-(1-&gt;3)-beta-D-Gal-(1-&gt;3)-beta-D-Gal-(1-&gt;4)-beta-D-Xyl}-L-seryl-[protein] + UDP + H(+). The catalysed reaction is 3-O-{alpha-D-GlcNAc-[(1-&gt;4)-beta-D-GlcA-(1-&gt;4)-alpha-D-GlcNAc](n)-(1-&gt;4)-beta-D-GlcA-(1-&gt;3)-beta-D-Gal-(1-&gt;3)-beta-D-Gal-(1-&gt;4)-beta-D-Xyl}-L-seryl-[protein] + UDP-alpha-D-glucuronate = 3-O-{[(1-&gt;4)-beta-D-GlcA-(1-&gt;4)-alpha-D-GlcNAc](n+1)-(1-&gt;4)-beta-D-GlcA-(1-&gt;3)-beta-D-Gal-(1-&gt;3)-beta-D-Gal-(1-&gt;4)-beta-D-Xyl}-L-seryl-[protein] + UDP + H(+). The protein operates within protein modification; protein glycosylation. In terms of biological role, glycosyltransferase required for the biosynthesis of heparan-sulfate. In Danio rerio (Zebrafish), this protein is Exostosin-1a (ext1a).